The following is a 146-amino-acid chain: Pre-mRNA-splicing factor cwf14 (146 aa).

It belongs to the BUD31 (G10) family. Belongs to the 40S cdc5-associated complex (or cwf complex), a spliceosome sub-complex reminiscent of a late-stage spliceosome composed of the U2, U5 and U6 snRNAs and at least brr2, cdc5, cwf2/prp3, cwf3/syf1, cwf4/syf3, cwf5/ecm2, spp42/cwf6, cwf7/spf27, cwf8, cwf9, cwf10, cwf11, cwf12, prp45/cwf13, cwf14, cwf15, cwf16, cwf17, cwf18, cwf19, cwf20, cwf21, cwf22, cwf23, cwf24, cwf25, cwf26, cyp7/cwf27, cwf28, cwf29/ist3, lea1, msl1, prp5/cwf1, prp10, prp12/sap130, prp17, prp22, sap61, sap62, sap114, sap145, slu7, smb1, smd1, smd3, smf1, smg1 and syf2.

It is found in the nucleus. Its function is as follows. Involved in mRNA splicing where it associates with cdc5 and the other cwf proteins as part of the spliceosome. The sequence is that of Pre-mRNA-splicing factor cwf14 (cwf14) from Schizosaccharomyces pombe (strain 972 / ATCC 24843) (Fission yeast).